Reading from the N-terminus, the 715-residue chain is 1,4-alpha-glucan branching enzyme GlgB (715 aa).

The active-site Nucleophile is Asp396. The active-site Proton donor is Glu449.

Belongs to the glycosyl hydrolase 13 family. GlgB subfamily. In terms of assembly, monomer.

It carries out the reaction Transfers a segment of a (1-&gt;4)-alpha-D-glucan chain to a primary hydroxy group in a similar glucan chain.. Its pathway is glycan biosynthesis; glycogen biosynthesis. Its function is as follows. Catalyzes the formation of the alpha-1,6-glucosidic linkages in glycogen by scission of a 1,4-alpha-linked oligosaccharide from growing alpha-1,4-glucan chains and the subsequent attachment of the oligosaccharide to the alpha-1,6 position. This is 1,4-alpha-glucan branching enzyme GlgB from Vibrio vulnificus (strain YJ016).